A 388-amino-acid polypeptide reads, in one-letter code: Valine--pyruvate aminotransferase (388 aa).

N6-(pyridoxal phosphate)lysine is present on lysine 234.

Belongs to the class-I pyridoxal-phosphate-dependent aminotransferase family. Requires pyridoxal 5'-phosphate as cofactor.

It catalyses the reaction L-valine + pyruvate = 3-methyl-2-oxobutanoate + L-alanine. This Mycobacterium tuberculosis (strain ATCC 25618 / H37Rv) protein is Valine--pyruvate aminotransferase.